A 79-amino-acid polypeptide reads, in one-letter code: D-alanyl carrier protein (79 aa).

The 76-residue stretch at methionine 1 to valine 76 folds into the Carrier domain. Residue serine 34 is modified to O-(pantetheine 4'-phosphoryl)serine.

It belongs to the DltC family. 4'-phosphopantetheine is transferred from CoA to a specific serine of apo-DCP.

Its subcellular location is the cytoplasm. It participates in cell wall biogenesis; lipoteichoic acid biosynthesis. Carrier protein involved in the D-alanylation of lipoteichoic acid (LTA). The loading of thioester-linked D-alanine onto DltC is catalyzed by D-alanine--D-alanyl carrier protein ligase DltA. The DltC-carried D-alanyl group is further transferred to cell membrane phosphatidylglycerol (PG) by forming an ester bond, probably catalyzed by DltD. D-alanylation of LTA plays an important role in modulating the properties of the cell wall in Gram-positive bacteria, influencing the net charge of the cell wall. This is D-alanyl carrier protein from Abiotrophia defectiva (Streptococcus defectivus).